Here is a 260-residue protein sequence, read N- to C-terminus: Small ribosomal subunit protein uS2 (260 aa).

Belongs to the universal ribosomal protein uS2 family.

This is Small ribosomal subunit protein uS2 (rpsB) from Borreliella burgdorferi (strain ATCC 35210 / DSM 4680 / CIP 102532 / B31) (Borrelia burgdorferi).